Consider the following 586-residue polypeptide: Chaperone protein HscA homolog (586 aa).

This sequence belongs to the heat shock protein 70 family.

Chaperone involved in the maturation of iron-sulfur cluster-containing proteins. Has a low intrinsic ATPase activity which is markedly stimulated by HscB. In Rickettsia typhi (strain ATCC VR-144 / Wilmington), this protein is Chaperone protein HscA homolog.